Consider the following 555-residue polypeptide: MSLNTDDSGRIRTRQRAKRACETCKLRKRKCDGHEPCTYCLRYEYQCTFKPHPRRKPAASKSSARPSEEEDSPKFLDRVDANQEHMEANSGTAFPHLLGMRLNPQGAPKVYGFSWNLGPRDEPLEPFTNLTDLISREEMEDLASHYLKKIHPVYAVLDPDTLRQKIVARWHDPATAASYDPILCSVAALGSLYSGHQEHPKEGALVQSAKEMLETTRISKTTLLHHATAWILRTIYLRSTNCPHASWMASCSTMHIIEAIGAHQDPELVSLVYSDTADVSVNDESQRRLFWVATVLNSWISYEYGRSRVILRGVSCKPPLPRTGDFTTDLISMYQISERLDPDQNNKLSDLEDALSRVERLTLSHDALILSQSNLALTIYRRLRVASSNISNDILTRIIRLGNDGLEAAVRLAEDRSPWWHVANIPFQFLCILLAIDTRESLSYVGPALRSFRAITRHYSTPTLHTALETIESLVRLSQNKKERDLTLLRDSMQQEDPGLTEQGSTTSQAFNDASWLGATGDLTLPDNFDWDWNVFLDTQVPFFDEGEAGGQRYR.

The zn(2)-C6 fungal-type DNA-binding region spans 21–47 (CETCKLRKRKCDGHEPCTYCLRYEYQC). The interval 51–73 (PHPRRKPAASKSSARPSEEEDSP) is disordered.

It is found in the nucleus. Its function is as follows. Transcription factor that regulates the gene cluster that mediates the biosynthesis of 5-hydroxy-2-hydroxymethyl-1,4-pyrone, also know as kojic acid, a by-product in the fermentation process of malting rice that acts as a chelation agent. Mediates the expression of kojA and kojT via binding of an 11-nucleotide palindromic sequence, 5'-CGRCTWAGYCG-3' (R=A/G, W=A/T, Y=C/T) within the target gene promoters. The polypeptide is Transcription factor kojR (Aspergillus flavus (strain ATCC 200026 / FGSC A1120 / IAM 13836 / NRRL 3357 / JCM 12722 / SRRC 167)).